Here is a 387-residue protein sequence, read N- to C-terminus: Cysteine desulfurase IscS (387 aa).

Residues 73–74 (AT), asparagine 155, glutamine 183, and 203–205 (SAH) each bind pyridoxal 5'-phosphate. Lysine 206 is modified (N6-(pyridoxal phosphate)lysine). Threonine 241 serves as a coordination point for pyridoxal 5'-phosphate. Cysteine 328 (cysteine persulfide intermediate) is an active-site residue. Position 328 (cysteine 328) interacts with [2Fe-2S] cluster.

Belongs to the class-V pyridoxal-phosphate-dependent aminotransferase family. NifS/IscS subfamily. As to quaternary structure, homodimer. Forms a heterotetramer with IscU, interacts with other sulfur acceptors. The cofactor is pyridoxal 5'-phosphate.

The protein resides in the cytoplasm. It catalyses the reaction (sulfur carrier)-H + L-cysteine = (sulfur carrier)-SH + L-alanine. Its pathway is cofactor biosynthesis; iron-sulfur cluster biosynthesis. Master enzyme that delivers sulfur to a number of partners involved in Fe-S cluster assembly, tRNA modification or cofactor biosynthesis. Catalyzes the removal of elemental sulfur atoms from cysteine to produce alanine. Functions as a sulfur delivery protein for Fe-S cluster synthesis onto IscU, an Fe-S scaffold assembly protein, as well as other S acceptor proteins. This is Cysteine desulfurase IscS from Helicobacter pylori (strain ATCC 700392 / 26695) (Campylobacter pylori).